The primary structure comprises 217 residues: uncharacterized protein (217 aa).

Helical transmembrane passes span 13-35 (IWLTSTLLAMKYLTPLNLAIALL), 50-68 (FSLVFPILLSALAAYILYL), 75-94 (FLLAYSILFIALKFVNEWRI), 109-131 (MMALAYGAGLMEILAPLTLLFSL), 152-174 (YLAIIPLALIFYILSHPVLAAAV), and 194-216 (GFSLLFLNLLFVVGFLALDFAGL).

Its subcellular location is the cell membrane. This is an uncharacterized protein from Archaeoglobus fulgidus (strain ATCC 49558 / DSM 4304 / JCM 9628 / NBRC 100126 / VC-16).